A 134-amino-acid polypeptide reads, in one-letter code: Putative F-box protein R638 (134 aa).

The F-box domain maps to 5 to 52 (NIMNLLNEDCILHILSFLADKDKIQLSLSCKSNLKFLHKTIYDDIYFY).

The polypeptide is Putative F-box protein R638 (Acanthamoeba polyphaga mimivirus (APMV)).